The primary structure comprises 551 residues: Arginine--tRNA ligase (551 aa).

Positions 123–133 (ANPTGPLTIGR) match the 'HIGH' region motif.

This sequence belongs to the class-I aminoacyl-tRNA synthetase family. In terms of assembly, monomer.

It is found in the cytoplasm. It carries out the reaction tRNA(Arg) + L-arginine + ATP = L-arginyl-tRNA(Arg) + AMP + diphosphate. This chain is Arginine--tRNA ligase, found in Chlorobaculum tepidum (strain ATCC 49652 / DSM 12025 / NBRC 103806 / TLS) (Chlorobium tepidum).